We begin with the raw amino-acid sequence, 373 residues long: Putative citrate synthase 2 (373 aa).

Residues H250 and E303 contribute to the active site.

Belongs to the citrate synthase family.

The catalysed reaction is oxaloacetate + acetyl-CoA + H2O = citrate + CoA + H(+). It participates in carbohydrate metabolism; tricarboxylic acid cycle; isocitrate from oxaloacetate: step 1/2. This chain is Putative citrate synthase 2 (citA), found in Mycobacterium bovis (strain ATCC BAA-935 / AF2122/97).